We begin with the raw amino-acid sequence, 356 residues long: UDP-N-acetylglucosamine--N-acetylmuramyl-(pentapeptide) pyrophosphoryl-undecaprenol N-acetylglucosamine transferase (356 aa).

UDP-N-acetyl-alpha-D-glucosamine is bound by residues 11 to 13 (TGG), Asn123, Arg159, Ser187, Ile241, 260 to 265 (ALTVAE), and Gln286.

The protein belongs to the glycosyltransferase 28 family. MurG subfamily.

Its subcellular location is the cell inner membrane. The enzyme catalyses di-trans,octa-cis-undecaprenyl diphospho-N-acetyl-alpha-D-muramoyl-L-alanyl-D-glutamyl-meso-2,6-diaminopimeloyl-D-alanyl-D-alanine + UDP-N-acetyl-alpha-D-glucosamine = di-trans,octa-cis-undecaprenyl diphospho-[N-acetyl-alpha-D-glucosaminyl-(1-&gt;4)]-N-acetyl-alpha-D-muramoyl-L-alanyl-D-glutamyl-meso-2,6-diaminopimeloyl-D-alanyl-D-alanine + UDP + H(+). Its pathway is cell wall biogenesis; peptidoglycan biosynthesis. Cell wall formation. Catalyzes the transfer of a GlcNAc subunit on undecaprenyl-pyrophosphoryl-MurNAc-pentapeptide (lipid intermediate I) to form undecaprenyl-pyrophosphoryl-MurNAc-(pentapeptide)GlcNAc (lipid intermediate II). The polypeptide is UDP-N-acetylglucosamine--N-acetylmuramyl-(pentapeptide) pyrophosphoryl-undecaprenol N-acetylglucosamine transferase (Azoarcus sp. (strain BH72)).